A 313-amino-acid polypeptide reads, in one-letter code: MAFNLKGRSLLTLKEYTPQEIRYLLDIAKQVKAERKAGIVHQRFVGKTIALIFEKRSTRTRCAFETAFGEEGGHPVFLSTDDIQLGAKESIEDTARVLGRMFDAIEFRGFKQETVEILAKYAGVPVYNGLTDEYHPTQVLADLMTIEEEFGSLKGRKLVFVGDGRNNMANTLAIGCAKMGMHYVINSPKELWPSESFIKEIKDMAAENGGTFELTSVPGEGLEGADAIYTDVWASMGEEAKAEERERLLRPYQVNEEMMKKTGRDDTIFLHCLPAVKGQEVTFEVIEGKQSRVWDQAENRKHTIKAVLIATLL.

Residues 57–60 (STRT), glutamine 84, arginine 108, and 135–138 (HPTQ) each bind carbamoyl phosphate. L-ornithine-binding positions include asparagine 167, aspartate 231, and 235–236 (SM). Carbamoyl phosphate is bound by residues 272–273 (CL) and arginine 300.

It belongs to the aspartate/ornithine carbamoyltransferase superfamily. OTCase family.

The protein localises to the cytoplasm. It catalyses the reaction carbamoyl phosphate + L-ornithine = L-citrulline + phosphate + H(+). It participates in amino-acid biosynthesis; L-arginine biosynthesis; L-arginine from L-ornithine and carbamoyl phosphate: step 1/3. In terms of biological role, reversibly catalyzes the transfer of the carbamoyl group from carbamoyl phosphate (CP) to the N(epsilon) atom of ornithine (ORN) to produce L-citrulline. The sequence is that of Ornithine carbamoyltransferase from Caldanaerobacter subterraneus subsp. tengcongensis (strain DSM 15242 / JCM 11007 / NBRC 100824 / MB4) (Thermoanaerobacter tengcongensis).